Reading from the N-terminus, the 239-residue chain is Small ribosomal subunit protein uS2 (239 aa).

The protein belongs to the universal ribosomal protein uS2 family.

The protein is Small ribosomal subunit protein uS2 of Francisella tularensis subsp. holarctica (strain FTNF002-00 / FTA).